Reading from the N-terminus, the 255-residue chain is Cytosolic Fe-S cluster assembly factor Nubp2 homolog (255 aa).

14–21 (GKGGVGKS) is a binding site for ATP. Residues C185 and C188 each contribute to the [4Fe-4S] cluster site.

This sequence belongs to the Mrp/NBP35 ATP-binding proteins family. NUBP2/CFD1 subfamily. In terms of assembly, heterotetramer of 2 Nubp1 and 2 Nubp2 chains. [4Fe-4S] cluster is required as a cofactor.

It localises to the cytoplasm. Component of the cytosolic iron-sulfur (Fe/S) protein assembly (CIA) machinery. Required for maturation of extramitochondrial Fe-S proteins. The Nubp1-Nubp2 heterotetramer forms a Fe-S scaffold complex, mediating the de novo assembly of an Fe-S cluster and its transfer to target apoproteins. The chain is Cytosolic Fe-S cluster assembly factor Nubp2 homolog from Drosophila persimilis (Fruit fly).